The sequence spans 66 residues: KEGYLVNHSTGCKYECYKLGDNDYCLRECKQQYGKGAGGYCYAFGCWCTHLYEQAVVWPLPKKTCN.

Residues 1–66 enclose the LCN-type CS-alpha/beta domain; it reads KEGYLVNHST…VWPLPKKTCN (66 aa). 4 disulfide bridges follow: Cys-12-Cys-65, Cys-16-Cys-41, Cys-25-Cys-46, and Cys-29-Cys-48. Asn-66 is subject to Asparagine amide.

This sequence belongs to the long (4 C-C) scorpion toxin superfamily. Sodium channel inhibitor family. Beta subfamily. Expressed by the venom gland.

The protein localises to the secreted. Beta toxins bind voltage-independently at site-4 of sodium channels and shift the voltage of activation toward more negative potentials thereby affecting sodium channel activation and promoting spontaneous and repetitive firing. Is active on the human voltage-gated sodium channel Nav1.6/SCN8A when tested at 200 nM. In vivo, is toxic to mice when intraperitoneally injected. The protein is Beta-toxin Cbo1 of Centruroides bonito (Scorpion).